Consider the following 337-residue polypeptide: MSTDSSQFEVVPANASALDNDVSSHMSMLYQDIVRNPELFWEMLRDFHESSDKKFKIPIVGGKSLDLHRLFNEVTSRGGLEKVIKDRRCKEVIDAFNFKTTITNSAFVLRKSYLKMLFEFEHLYYFQAPLSTFWEKEKALKLLIEKSANRDKDSQELKPGTVITGIIDGKFESGYLISTKVGSEKLKGMLYHISPETKRGKKKAKSSQGDSHKPPKRQRTGYNFFVAEQSVRIKAENAGQKVSSPKNFGNMWTNLSESDRKVYYEKSREDGKRYKMEILQYRSLMESRVAEIVAATDAGTSASAAETADEASQENLAKTDACTSASSAAETEDEVSQ.

In terms of domain architecture, ARID spans 34–125; the sequence is VRNPELFWEM…MLFEFEHLYY (92 aa). 2 disordered regions span residues 197 to 221 and 298 to 337; these read TKRGKKKAKSSQGDSHKPPKRQRTG and AGTSASAAETADEASQENLAKTDACTSASSAAETEDEVSQ. Positions 215–282 form a DNA-binding region, HMG box; it reads PKRQRTGYNF…RYKMEILQYR (68 aa). A compositionally biased stretch (low complexity) spans 319 to 329; that stretch reads TDACTSASSAA.

Belongs to the HMGB family.

Its subcellular location is the nucleus. Its function is as follows. Binds preferentially DNA with A/T-rich content. The polypeptide is Putative high mobility group B protein 11 (HMGB11) (Arabidopsis thaliana (Mouse-ear cress)).